The primary structure comprises 166 residues: Keratin, type II cytoskeletal 68 kDa, component IB (166 aa).

The 41-residue stretch at 1 to 41 (EAKDDLARLLRDYQDAMNVKLALDVEIATYRKLLEGEECRM) folds into the IF rod domain. A coil 2B region spans residues 1-41 (EAKDDLARLLRDYQDAMNVKLALDVEIATYRKLLEGEECRM). Residues 42-166 (SGECPSAVSI…FSQSSQRTSR (125 aa)) form a tail region. Residues 122–146 (GFGGGSSGFGSGSGGRSGVSGGGLS) show a composition bias toward gly residues. Residues 122-166 (GFGGGSSGFGSGSGGRSGVSGGGLSSGSSRGGSVRFSQSSQRTSR) are disordered. Low complexity predominate over residues 147–166 (SGSSRGGSVRFSQSSQRTSR).

It belongs to the intermediate filament family. In terms of assembly, heterotetramer of two type I and two type II keratins.

The protein is Keratin, type II cytoskeletal 68 kDa, component IB of Bos taurus (Bovine).